Consider the following 691-residue polypeptide: Protein 4.2 (691 aa).

Gly-2 is lipidated: N-myristoyl glycine. Residues 31-39 form a band 3 binding region; it reads LFVRRGQPF. The residue at position 248 (Ser-248) is a Phosphoserine; by PKA.

The protein belongs to the transglutaminase superfamily. Transglutaminase family. In terms of assembly, component of the ankyrin-1 complex in the erythrocyte, composed of ANK1, RHCE, RHAG, SLC4A1, EPB42, GYPA, GYPB and AQP1. Interacts with SLC4A1 (via the cytoplasmic domain); this interaction is mediated by the SLC4A1 Band 3-I dimer. Interacts with ANK1 (via ANK 1-13 repeats). Interacts with AQP1 (via the C-terminal). Both cAMP-dependent kinase (CAPK) and another kinase present in the red-blood cells seem to be able to phosphorylate EPB42.

The protein resides in the cell membrane. It localises to the cytoplasm. Its subcellular location is the cytoskeleton. Functionally, component of the ankyrin-1 complex, a multiprotein complex involved in the stability and shape of the erythrocyte membrane. The protein is Protein 4.2 of Homo sapiens (Human).